The primary structure comprises 188 residues: Elongation factor P (188 aa).

The protein belongs to the elongation factor P family.

It localises to the cytoplasm. Its pathway is protein biosynthesis; polypeptide chain elongation. Its function is as follows. Involved in peptide bond synthesis. Stimulates efficient translation and peptide-bond synthesis on native or reconstituted 70S ribosomes in vitro. Probably functions indirectly by altering the affinity of the ribosome for aminoacyl-tRNA, thus increasing their reactivity as acceptors for peptidyl transferase. The polypeptide is Elongation factor P (Leptospira biflexa serovar Patoc (strain Patoc 1 / Ames)).